Consider the following 1071-residue polypeptide: MPSLMSFGSCQWIDQGRFSRSLYRNFKTFKLHEMHGLCMPNLLLNPDIHGDRIIFVCCDDLWEHDLKSGSTRKIVSNLGVINNARFFPDGRKIAIRVMRGSSLNTADLYFYNGENGEIKRITYFSGKSTGRRMFTDVAGFDPDGNLIISTDAMQPFSSMTCLYRVENDGINFVPLNLGPATHILFADGRRVIGRNTFELPHWKGYRGGTRGKIWIEVNSGAFKKIVDMSTHVSSPVIVGHRIYFITDIDGFGQIYSTDLDGKDLRKHTSFTDYYPRHLNTDGRRILFSKGGSIYIFNPDTEKIEKIEIGDLESPEDRIISIPSKFAEDFSPLDGDLIAFVSRGQAFIQDVSGTYVLKVPEPLRIRYVRRGGDTKVAFIHGTREGDFLGIYDYRTGKAEKFEENLGNVFAMGVDRNGKFAVVANDRFEIMTVDLETGKPTVIERSREAMITDFTISDNSRFIAYGFPLKHGETDGYVMQAIHVYDMEGRKIFAATTENSHDYAPAFDADSKNLYYLSYRSLDPSPDRVVLNFSFEVVSKPFVIPLIPGSPNPTKLVPRSMTSEAGEYDLNDMYKRSSPINVDPGDYRMIIPLESSILIYSVPVHGEFAAYYQGAPEKGVLLKYDVKTRKVTEVKNNLTDLRLSADRKTVMVRKDDGKIYTFPLEKPEDERTVETDKRPLVSSIHEEFLQMYDEAWKLARDNYWNEAVAKEISERIYEKYRNLVPLCKTRYDLSNVIVEMQGEYRTSHSYEMGGTFTDKDPFRSGRIACDFKLDGDHYVVAKAYAGDYSNEGEKSPIFEYGIDPTGYLIEDIDGETVGAGSNIYRVLSEKAGTSARIRLSGKGGDKRDLMIDILDDDRFIRYRSWVEANRRYVHERSKGTIGYIHIPDMGMMGLNEFYRLFINESSYQGLIVDVRFNGGGFVSQLIIEKLMNKRIGYDNPRRGTLSPYPTNSVRGKIIAITNEYAGSDGDIFSFSFKKLGLGKLIGTRTWGGVVGITPKRRLIDGTVLTQPEFAFWFRDAGFGVENYGVDPDVEIEYAPHDYLSGKDPQIDYAIDALIEELRNWNEELPQRPS.

Residues 39–310 (MPNLLLNPDI…EKIEKIEIGD (272 aa)) are six-bladed beta propeller. The interval 131–132 (RR) is binds the substrate's C-terminus. The interval 326–675 (AEDFSPLDGD…EDERTVETDK (350 aa)) is seven-bladed beta propeller. The interval 679–745 (VSSIHEEFLQ…VEMQGEYRTS (67 aa)) is C-1; helical bundle. Residue His746 is the Charge relay system of the active site. The tract at residues 761–855 (RSGRIACDFK…DLMIDILDDD (95 aa)) is PDZ-like. The segment at 856–1061 (RFIRYRSWVE…IDALIEELRN (206 aa)) is C-2; alpha-beta sandwich. 916–918 (GGG) is a substrate binding site. Ser965 functions as the Nucleophile in the catalytic mechanism. Position 993-995 (993-995 (GIT)) interacts with substrate. Glu1023 serves as the catalytic Charge relay system.

It belongs to the peptidase S41B family. In terms of assembly, part of the Tricorn proteolytic complex. Assembles to form a hexameric toroid, 20 copies of which may then assemble to form an icosahedral supermolecule of 14.6 MDa.

The protein resides in the cytoplasm. Tricorn degrades oligopeptides (probably derived from the proteasome) and channels the products to F1, F2 and F3 proteases, which then catalyze the terminal degradation step, yielding free amino acids. The protein is Tricorn protease (tri) of Thermoplasma acidophilum (strain ATCC 25905 / DSM 1728 / JCM 9062 / NBRC 15155 / AMRC-C165).